Here is an 86-residue protein sequence, read N- to C-terminus: Mu-theraphotoxin-Hhn1b 1 (86 aa).

A signal peptide spans 1–21; it reads MKASMFLALAGLALLFVVCYA. Positions 22–49 are excised as a propeptide; it reads SESEEKEFSNELLSSVLAVDDNSKGEER. 3 disulfide bridges follow: C51/C66, C58/C73, and C65/C80. I84 carries the post-translational modification Isoleucine amide.

This sequence belongs to the neurotoxin 10 (Hwtx-1) family. 22 (Htx-4) subfamily. Monomer. Expressed by the venom gland.

It is found in the secreted. Neurotoxin that selectively inhibits neuronal tetrodotoxin-sensitive voltage-gated sodium channels (Nav) (IC(50)=44.6 nM). It is active on Nav1.2/SCN2A (IC(50)=22.4 nM), Nav1.6/SCN8A (IC(50)=50.1 nM) and Nav1.7/SCN9A (IC(50)=48.9 nM). It shows low affinity for lipid bilayers. The polypeptide is Mu-theraphotoxin-Hhn1b 1 (Cyriopagopus hainanus (Chinese bird spider)).